Consider the following 130-residue polypeptide: Small ribosomal subunit protein uS11 (130 aa).

Belongs to the universal ribosomal protein uS11 family. Part of the 30S ribosomal subunit. Interacts with proteins S7 and S18. Binds to IF-3.

Functionally, located on the platform of the 30S subunit, it bridges several disparate RNA helices of the 16S rRNA. Forms part of the Shine-Dalgarno cleft in the 70S ribosome. This chain is Small ribosomal subunit protein uS11, found in Prochlorococcus marinus (strain MIT 9215).